The primary structure comprises 280 residues: Undecaprenyl-diphosphatase (280 aa).

The next 7 helical transmembrane spans lie at 1–21, 45–65, 90–110, 115–135, 151–171, 226–246, and 260–280; these read MTLL…PFPV, FLPF…GVFW, IFGL…LLEH, VFGT…LLMV, IATL…LALL, IMVQ…ICSL, and LTPF…VILL.

This sequence belongs to the UppP family.

The protein resides in the cell inner membrane. The catalysed reaction is di-trans,octa-cis-undecaprenyl diphosphate + H2O = di-trans,octa-cis-undecaprenyl phosphate + phosphate + H(+). Functionally, catalyzes the dephosphorylation of undecaprenyl diphosphate (UPP). Confers resistance to bacitracin. In Gluconobacter oxydans (strain 621H) (Gluconobacter suboxydans), this protein is Undecaprenyl-diphosphatase.